Here is a 332-residue protein sequence, read N- to C-terminus: Super small secreted glycoprotein (332 aa).

The N-terminal stretch at 1–33 (MGSGYQLLQLPRERFRKTSFLVWVIILFQRAIS) is a signal peptide. The N-linked (GlcNAc...) asparagine; by host glycan is linked to asparagine 41. 2 cysteine pairs are disulfide-bonded: cysteine 109-cysteine 136 and cysteine 122-cysteine 148. 4 N-linked (GlcNAc...) asparagine; by host glycosylation sites follow: asparagine 205, asparagine 239, asparagine 258, and asparagine 269.

It belongs to the filoviruses glycoprotein family.

It is found in the secreted. The polypeptide is Super small secreted glycoprotein (GP) (Homo sapiens (Human)).